The sequence spans 565 residues: Probable serine/threonine-protein kinase abkA (565 aa).

Residues 44–77 are a coiled coil; it reads NNNNISLKDKFKDLKDLKDNLNEKKINNDNDDDD. The region spanning 231 to 565 is the Protein kinase domain; the sequence is LFQDDPIAAA…FKNIFYKNYK (335 aa). ATP contacts are provided by residues 237-245 and lysine 259; that span reads IAAASIGQV. Aspartate 401 acts as the Proton acceptor in catalysis.

The protein belongs to the protein kinase superfamily. ADCK protein kinase family.

The chain is Probable serine/threonine-protein kinase abkA (abkA) from Dictyostelium discoideum (Social amoeba).